The following is a 222-amino-acid chain: MPVIKKEELSQKKDLESEEEDSGLEDEYEVEKVIKHRGKGKNIEFLVRWKGYGPEYDTWEPTENVASAEEAVAAYWETQDKTATAPRKRGRQEAYTASQTSITPKPESSKQAAKKARTSTAENGIKASVDKGEGNDGASDDDIDRQYSGSLDKYSDLKSWENVVQNIETVEQGEGGQLIVYATMKGGEKVTIPTELAYKKCPLKCLYFYQKHLKWRPVDENE.

The segment covering 1–15 has biased composition (basic and acidic residues); that stretch reads MPVIKKEELSQKKDL. Disordered regions lie at residues 1-26 and 77-147; these read MPVIKKEELSQKKDLESEEEDSGLED and ETQD…DRQY. A compositionally biased stretch (acidic residues) spans 16–26; that stretch reads ESEEEDSGLED. A Chromo domain is found at 28–87; that stretch reads YEVEKVIKHRGKGKNIEFLVRWKGYGPEYDTWEPTENVASAEEAVAAYWETQDKTATAPR.

Interacts with DMT5.

It localises to the nucleus. Recognizes and binds histone H3 tails methylated at 'Lys-9', leading to epigenetic repression. Localizes DMT5 to heterochromatin characterized by trimethylation of histone H3 tails at 'Lys-9'. This is Chromatin-associated protein SWI6 from Cryptococcus neoformans var. grubii serotype A (strain H99 / ATCC 208821 / CBS 10515 / FGSC 9487) (Filobasidiella neoformans var. grubii).